A 337-amino-acid polypeptide reads, in one-letter code: Ribosomal RNA small subunit methyltransferase C (337 aa).

This sequence belongs to the methyltransferase superfamily. RsmC family. In terms of assembly, monomer.

It localises to the cytoplasm. It carries out the reaction guanosine(1207) in 16S rRNA + S-adenosyl-L-methionine = N(2)-methylguanosine(1207) in 16S rRNA + S-adenosyl-L-homocysteine + H(+). Specifically methylates the guanine in position 1207 of 16S rRNA in the 30S particle. The protein is Ribosomal RNA small subunit methyltransferase C of Acinetobacter baumannii (strain AB307-0294).